The sequence spans 231 residues: Large ribosomal subunit protein uL1 (231 aa).

Belongs to the universal ribosomal protein uL1 family. In terms of assembly, part of the 50S ribosomal subunit.

Functionally, binds directly to 23S rRNA. The L1 stalk is quite mobile in the ribosome, and is involved in E site tRNA release. Its function is as follows. Protein L1 is also a translational repressor protein, it controls the translation of the L11 operon by binding to its mRNA. The protein is Large ribosomal subunit protein uL1 of Pseudomonas aeruginosa (strain LESB58).